We begin with the raw amino-acid sequence, 230 residues long: uncharacterized protein (230 aa).

This is an uncharacterized protein from Encephalitozoon cuniculi (strain GB-M1) (Microsporidian parasite).